A 21-amino-acid polypeptide reads, in one-letter code: Nitrilase (21 aa).

This sequence belongs to the carbon-nitrogen hydrolase superfamily. Nitrilase family.

It catalyses the reaction a nitrile + 2 H2O = a carboxylate + NH4(+). Its function is as follows. Acts on many kinds of nitrile compounds such as aliphatic, aromatic, and heterocyclic mononitriles or dinitriles. Prefers S-(-)-2-(4'-isobutylphenyl)-propionitrile to R-(+)-2-(4'-isobutylphenyl)-propionitrile as the substrate. This Acinetobacter sp. (strain AK226) protein is Nitrilase.